A 273-amino-acid polypeptide reads, in one-letter code: Undecaprenyl-diphosphatase (273 aa).

7 helical membrane passes run serine 39–phenylalanine 59, leucine 86–threonine 106, leucine 117–glycine 137, valine 146–valine 166, phenylalanine 189–leucine 209, leucine 220–leucine 240, and isoleucine 249–threonine 269.

It belongs to the UppP family.

Its subcellular location is the cell inner membrane. It carries out the reaction di-trans,octa-cis-undecaprenyl diphosphate + H2O = di-trans,octa-cis-undecaprenyl phosphate + phosphate + H(+). Functionally, catalyzes the dephosphorylation of undecaprenyl diphosphate (UPP). Confers resistance to bacitracin. In Pelobacter propionicus (strain DSM 2379 / NBRC 103807 / OttBd1), this protein is Undecaprenyl-diphosphatase.